We begin with the raw amino-acid sequence, 305 residues long: Homoserine kinase (305 aa).

Proline 95–alanine 105 provides a ligand contact to ATP.

It belongs to the GHMP kinase family. Homoserine kinase subfamily.

The protein resides in the cytoplasm. It carries out the reaction L-homoserine + ATP = O-phospho-L-homoserine + ADP + H(+). It functions in the pathway amino-acid biosynthesis; L-threonine biosynthesis; L-threonine from L-aspartate: step 4/5. Its function is as follows. Catalyzes the ATP-dependent phosphorylation of L-homoserine to L-homoserine phosphate. This chain is Homoserine kinase, found in Streptomyces avermitilis (strain ATCC 31267 / DSM 46492 / JCM 5070 / NBRC 14893 / NCIMB 12804 / NRRL 8165 / MA-4680).